A 475-amino-acid polypeptide reads, in one-letter code: UDP-glycosyltransferase 84A4 (475 aa).

His-20 acts as the Proton acceptor in catalysis. Position 20 (His-20) interacts with an anthocyanidin. Residues Gln-342, His-357, Trp-360, Asn-361, Ser-362, and Glu-365 each contribute to the UDP-alpha-D-glucose site. An anthocyanidin is bound at residue Gly-380. 2 residues coordinate UDP-alpha-D-glucose: Asp-381 and Gln-382.

It belongs to the UDP-glycosyltransferase family.

It catalyses the reaction (E)-4-coumarate + UDP-alpha-D-glucose = 4-O-(beta-D-glucosyl)-trans-4-coumarate + UDP + H(+). The enzyme catalyses (E)-ferulate + UDP-alpha-D-glucose = 1-O-[(E)-feruloyl]-beta-D-glucose + UDP. It carries out the reaction (E)-caffeate + UDP-alpha-D-glucose = 1-O-[(E)-caffeoyl]-beta-D-glucose + UDP. The catalysed reaction is (E)-sinapate + UDP-alpha-D-glucose = 1-O-(trans-sinapoyl)-beta-D-glucose + UDP. It catalyses the reaction (E)-cinnamate + UDP-alpha-D-glucose = 1-O-(trans-cinnamoyl)-beta-D-glucose + UDP. Its function is as follows. UDP-glucosyltransferase that forms glucose esters with phenylpropanoids. Glucosylates 4-coumarate, ferulate, caffeate, sinapate and cinnamate. The chain is UDP-glycosyltransferase 84A4 from Arabidopsis thaliana (Mouse-ear cress).